The following is a 467-amino-acid chain: UDP-N-acetylmuramate--L-alanine ligase (467 aa).

114–120 (GTHGKTT) contributes to the ATP binding site.

The protein belongs to the MurCDEF family.

The protein resides in the cytoplasm. It catalyses the reaction UDP-N-acetyl-alpha-D-muramate + L-alanine + ATP = UDP-N-acetyl-alpha-D-muramoyl-L-alanine + ADP + phosphate + H(+). The protein operates within cell wall biogenesis; peptidoglycan biosynthesis. In terms of biological role, cell wall formation. The protein is UDP-N-acetylmuramate--L-alanine ligase of Bradyrhizobium sp. (strain BTAi1 / ATCC BAA-1182).